A 336-amino-acid chain; its full sequence is Phospholipase A1 (336 aa).

Residues 1-27 form the signal peptide; the sequence is MEENMNLKYLLLFVYFVQVLNCCYGHG. A propeptide spanning residues 28-36 is cleaved from the precursor; sequence DPLSYELDR. Cysteine 40 and cysteine 123 form a disulfide bridge. Serine 173 (nucleophile) is an active-site residue. Aspartate 201 (charge relay system) is an active-site residue. 2 disulfides stabilise this stretch: cysteine 212/cysteine 217 and cysteine 255/cysteine 263. Histidine 265 acts as the Charge relay system in catalysis. Intrachain disulfides connect cysteine 280/cysteine 304, cysteine 281/cysteine 329, and cysteine 297/cysteine 302.

It belongs to the AB hydrolase superfamily. Lipase family. In terms of tissue distribution, expressed by the venom gland.

It localises to the secreted. It carries out the reaction a 1,2-diacyl-sn-glycero-3-phosphocholine + H2O = a 2-acyl-sn-glycero-3-phosphocholine + a fatty acid + H(+). Functionally, catalyzes the hydrolysis of phosphatidylcholine with phospholipase A1 activity. Induces hemolytic activity. Acts as an allergen. The chain is Phospholipase A1 from Vespula vulgaris (Yellow jacket).